Consider the following 324-residue polypeptide: Zinc transporter ZIP1 (324 aa).

Residues 1 to 30 are Extracellular-facing; it reads MGPWGEPELLVWRPEAVASEPPVPVGLEVK. The helical transmembrane segment at 31 to 51 threads the bilayer; that stretch reads LGALVLLLVLTLLCSLVPICV. Topologically, residues 52–68 are cytoplasmic; that stretch reads LRRPGANHEGSASRQKA. The helical transmembrane segment at 69 to 89 threads the bilayer; that stretch reads LSLVSCFAGGVFLATCLLDLL. The Extracellular segment spans residues 90 to 104; it reads PDYLAAIDEALAALH. A helical transmembrane segment spans residues 105-125; it reads VTLQFPLQEFILAMGFFLVLV. The Cytoplasmic portion of the chain corresponds to 126 to 179; sequence MEQITLAYKEQSGPSPLEETRALLGTVNGGPQHWHDGPGVPQASGAPATPSALR. Residues 180–200 form a helical membrane-spanning segment; that stretch reads ACVLVFSLALHSVFEGLAVGL. At 201 to 206 the chain is on the extracellular side; sequence QRDRAR. Residues 207 to 227 form a helical membrane-spanning segment; it reads AMELCLALLLHKGILAVSLSL. Topologically, residues 228–237 are cytoplasmic; it reads RLLQSHLRAQ. Residues 238-258 traverse the membrane as a helical segment; that stretch reads VVAGCGILFSCMTPLGIGLGA. Residues 259–272 are Extracellular-facing; the sequence is ALAESAGPLHQLAQ. The helical transmembrane segment at 273-293 threads the bilayer; it reads SVLEGMAAGTFLYITFLEILP. Residues 294–303 lie on the Cytoplasmic side of the membrane; sequence QELASSEQRI. Residues 304–324 traverse the membrane as a helical segment; it reads LKVILLLAGFALLTGLLFIQI.

Belongs to the ZIP transporter (TC 2.A.5) family. In terms of tissue distribution, ubiquitous. Expressed in most adult and fetal tissues including the epidermis.

Its subcellular location is the cell membrane. The protein localises to the endoplasmic reticulum membrane. The catalysed reaction is Zn(2+)(in) = Zn(2+)(out). Its activity is regulated as follows. Inhibited by Ni(2+) ions. Fe(2+) ions do not inhibit zinc uptake. In terms of biological role, transporter for the divalent cation Zn(2+). Mediates the influx of Zn(2+) into cells from extracellular space. Functions as the major importer of zinc from circulating blood plasma into prostate cells. This chain is Zinc transporter ZIP1, found in Homo sapiens (Human).